Here is a 641-residue protein sequence, read N- to C-terminus: MTVTKTPLLDTVRDASDVRRLPEEKLSQLADELRAETISAVSVTGGHLGAGLGVVELTVALHHVFNTPHDRLIWDVGHQCYPHKILTGRRDRIRTLRQGGGLSGFTRRSESEYDPFGAAHSSTSISAGLGMAVARDLSGGDRNVIAVIGDGAMSAGMAYEAMNNAGAMDSRLIVILNDNDMSIAPPTGAMSAYLARLISGRTYLSLREIGKQLAGHLPKFVKDGAAKAEEFARGFWTGGTLFEEMGFYYVGPIDGHNLEHLLPVLKNVRDAKTGPILVHVVTQKGKGYPPAEASADKYHGVVKFDVVTGAQVKAKSNAPSYTRVFAETLIDEARRDDKVVAITAAMPSGTGLDLFGQAFPQRTFDVGIAEQHAVTFAAGLAAEGYRPFCALYSTFLQRGYDQVVHDVALQGLPVRFAIDRAGLVGADGATHAGAFDLAMLTCLPGFTVMAPADEAELTHMIATAVGHDAGPIAFRFPRGEGVGVERPEKGERLPIGKGRVVREGQDIAFLSLGTRLAACLDVAERLSSLGISATVADARFAKPIDRELIAHLARTHAALVVVEEGSVGGFGSQVLQFLSDEGLMDGGLKVRALTLPDTYIDHDTPAAQLAEAGLDADGIYKRALALVQPAERRGAVATKRA.

Residues H78 and 119–121 contribute to the thiamine diphosphate site; that span reads AHS. Residue D150 coordinates Mg(2+). Thiamine diphosphate contacts are provided by residues 151 to 152, N179, Y288, and E370; that span reads GA. N179 is a Mg(2+) binding site.

Belongs to the transketolase family. DXPS subfamily. Homodimer. The cofactor is Mg(2+). Thiamine diphosphate serves as cofactor.

It carries out the reaction D-glyceraldehyde 3-phosphate + pyruvate + H(+) = 1-deoxy-D-xylulose 5-phosphate + CO2. The protein operates within metabolic intermediate biosynthesis; 1-deoxy-D-xylulose 5-phosphate biosynthesis; 1-deoxy-D-xylulose 5-phosphate from D-glyceraldehyde 3-phosphate and pyruvate: step 1/1. In terms of biological role, catalyzes the acyloin condensation reaction between C atoms 2 and 3 of pyruvate and glyceraldehyde 3-phosphate to yield 1-deoxy-D-xylulose-5-phosphate (DXP). This is 1-deoxy-D-xylulose-5-phosphate synthase from Azorhizobium caulinodans (strain ATCC 43989 / DSM 5975 / JCM 20966 / LMG 6465 / NBRC 14845 / NCIMB 13405 / ORS 571).